Reading from the N-terminus, the 20-residue chain is Brevinin-1T (20 aa).

A disulfide bridge links Cys14 with Cys20.

This sequence belongs to the frog skin active peptide (FSAP) family. Brevinin subfamily. In terms of tissue distribution, expressed by the skin glands.

The protein resides in the secreted. Antibacterial activity against representative Gram-negative and Gram-positive bacteria and exhibits a very high hemolytic activity. The protein is Brevinin-1T of Rana temporaria (European common frog).